A 206-amino-acid chain; its full sequence is Protein SYM1 (206 aa).

Helical transmembrane passes span Pro16–Gln36, Leu103–Phe123, and Leu155–Ile175.

This sequence belongs to the peroxisomal membrane protein PXMP2/4 family.

The protein resides in the mitochondrion inner membrane. May be involved in cellular response to stress. Required to maintain mitochondrial DNA (mtDNA) integrity and stability. This Debaryomyces hansenii (strain ATCC 36239 / CBS 767 / BCRC 21394 / JCM 1990 / NBRC 0083 / IGC 2968) (Yeast) protein is Protein SYM1 (SYM1).